Here is a 594-residue protein sequence, read N- to C-terminus: UvrABC system protein C (594 aa).

The GIY-YIG domain maps to 14 to 91 (DQPGCYLMKD…IKKYDPKYNI (78 aa)). One can recognise a UVR domain in the interval 196 to 231 (KEVRSELEIKMYEASEKLEFERAKELRDQIAHIDAI).

Belongs to the UvrC family. As to quaternary structure, interacts with UvrB in an incision complex.

Its subcellular location is the cytoplasm. Its function is as follows. The UvrABC repair system catalyzes the recognition and processing of DNA lesions. UvrC both incises the 5' and 3' sides of the lesion. The N-terminal half is responsible for the 3' incision and the C-terminal half is responsible for the 5' incision. This is UvrABC system protein C from Bacillus cereus (strain B4264).